The following is a 366-amino-acid chain: Alanine racemase (366 aa).

The active-site Proton acceptor; specific for D-alanine is the Lys40. N6-(pyridoxal phosphate)lysine is present on Lys40. Residue Arg136 participates in substrate binding. Tyr263 serves as the catalytic Proton acceptor; specific for L-alanine. Position 310 (Met310) interacts with substrate.

It belongs to the alanine racemase family. It depends on pyridoxal 5'-phosphate as a cofactor.

It catalyses the reaction L-alanine = D-alanine. The protein operates within amino-acid biosynthesis; D-alanine biosynthesis; D-alanine from L-alanine: step 1/1. Its function is as follows. Catalyzes the interconversion of L-alanine and D-alanine. May also act on other amino acids. This Streptococcus agalactiae serotype Ia (strain ATCC 27591 / A909 / CDC SS700) protein is Alanine racemase (alr).